The primary structure comprises 370 residues: 3-isopropylmalate dehydrogenase (370 aa).

77 to 90 (GPKWDGVPYDARPE) is a binding site for NAD(+). Arg-97, Arg-107, Arg-135, and Asp-226 together coordinate substrate. Mg(2+)-binding residues include Asp-226, Asp-250, and Asp-254. An NAD(+)-binding site is contributed by 290-302 (GSAPDIAGKGMAN).

It belongs to the isocitrate and isopropylmalate dehydrogenases family. LeuB type 1 subfamily. Homodimer. Mg(2+) is required as a cofactor. It depends on Mn(2+) as a cofactor.

The protein localises to the cytoplasm. The enzyme catalyses (2R,3S)-3-isopropylmalate + NAD(+) = 4-methyl-2-oxopentanoate + CO2 + NADH. It functions in the pathway amino-acid biosynthesis; L-leucine biosynthesis; L-leucine from 3-methyl-2-oxobutanoate: step 3/4. Its function is as follows. Catalyzes the oxidation of 3-carboxy-2-hydroxy-4-methylpentanoate (3-isopropylmalate) to 3-carboxy-4-methyl-2-oxopentanoate. The product decarboxylates to 4-methyl-2 oxopentanoate. This chain is 3-isopropylmalate dehydrogenase, found in Rhodopseudomonas palustris (strain ATCC BAA-98 / CGA009).